Consider the following 225-residue polypeptide: Ribose-5-phosphate isomerase A (225 aa).

Substrate is bound by residues 27–30, 80–83, and 93–96; these read SGST, DGAD, and KGGG. The active-site Proton acceptor is E102. K120 provides a ligand contact to substrate.

Belongs to the ribose 5-phosphate isomerase family. In terms of assembly, homodimer.

It catalyses the reaction aldehydo-D-ribose 5-phosphate = D-ribulose 5-phosphate. It participates in carbohydrate degradation; pentose phosphate pathway; D-ribose 5-phosphate from D-ribulose 5-phosphate (non-oxidative stage): step 1/1. Functionally, catalyzes the reversible conversion of ribose-5-phosphate to ribulose 5-phosphate. This Korarchaeum cryptofilum (strain OPF8) protein is Ribose-5-phosphate isomerase A.